Consider the following 542-residue polypeptide: Chaperonin GroEL (542 aa).

ATP is bound by residues 30–33 (TLGP), K51, 87–91 (DGTTT), G415, 480–482 (NAA), and D496.

This sequence belongs to the chaperonin (HSP60) family. Forms a cylinder of 14 subunits composed of two heptameric rings stacked back-to-back. Interacts with the co-chaperonin GroES.

The protein resides in the cytoplasm. The enzyme catalyses ATP + H2O + a folded polypeptide = ADP + phosphate + an unfolded polypeptide.. Together with its co-chaperonin GroES, plays an essential role in assisting protein folding. The GroEL-GroES system forms a nano-cage that allows encapsulation of the non-native substrate proteins and provides a physical environment optimized to promote and accelerate protein folding. The chain is Chaperonin GroEL from Tremblaya princeps.